The following is a 702-amino-acid chain: ATP-dependent zinc metalloprotease FtsH (702 aa).

The Cytoplasmic portion of the chain corresponds to 1 to 26 (MKKRNKGLVEQTTTEKNNFSRKTAWK). A helical membrane pass occupies residues 27 to 47 (VFWWVIILAVVIGVLAYIFSP). Residues 48–175 (RAATAVVESW…FIAPDTRARD (128 aa)) lie on the Extracellular side of the membrane. A helical transmembrane segment spans residues 176-196 (VLNGLFGLLPIIIFVVFFLLF). Residues 197–702 (WRSARGISAG…EVKPESETNS (506 aa)) lie on the Cytoplasmic side of the membrane. 271-278 (GPPGTGKT) provides a ligand contact to ATP. His493 contributes to the Zn(2+) binding site. Glu494 is an active-site residue. Residues His497 and Asp572 each contribute to the Zn(2+) site. Residues 682-702 (EQQAKQKLNKSEVKPESETNS) are disordered. Basic and acidic residues predominate over residues 690 to 702 (NKSEVKPESETNS).

The protein in the central section; belongs to the AAA ATPase family. This sequence in the C-terminal section; belongs to the peptidase M41 family. Homohexamer. Requires Zn(2+) as cofactor.

The protein localises to the cell membrane. Acts as a processive, ATP-dependent zinc metallopeptidase for both cytoplasmic and membrane proteins. Plays a role in the quality control of integral membrane proteins. The protein is ATP-dependent zinc metalloprotease FtsH of Mycoplasma genitalium (strain ATCC 33530 / DSM 19775 / NCTC 10195 / G37) (Mycoplasmoides genitalium).